Reading from the N-terminus, the 162-residue chain is RNA pyrophosphohydrolase (162 aa).

One can recognise a Nudix hydrolase domain in the interval 7-149 (KYRPCVGIML…KKEVYKTVIE (143 aa)). The Nudix box motif lies at 40–61 (GGVDDGEELEQAALRELLEEVG).

It belongs to the Nudix hydrolase family. RppH subfamily. A divalent metal cation is required as a cofactor.

Functionally, accelerates the degradation of transcripts by removing pyrophosphate from the 5'-end of triphosphorylated RNA, leading to a more labile monophosphorylated state that can stimulate subsequent ribonuclease cleavage. This chain is RNA pyrophosphohydrolase, found in Wolbachia sp. subsp. Drosophila simulans (strain wRi).